Here is a 261-residue protein sequence, read N- to C-terminus: tRNA pseudouridine synthase A (261 aa).

The active-site Nucleophile is Asp-51. Substrate is bound at residue Tyr-109.

This sequence belongs to the tRNA pseudouridine synthase TruA family. In terms of assembly, homodimer.

It catalyses the reaction uridine(38/39/40) in tRNA = pseudouridine(38/39/40) in tRNA. Formation of pseudouridine at positions 38, 39 and 40 in the anticodon stem and loop of transfer RNAs. This Shewanella sp. (strain MR-4) protein is tRNA pseudouridine synthase A.